The sequence spans 172 residues: MAKMQSKMQSDKPDDGMREKMIAVNRVTKVVKGGRIMGFAALAVVGDGDGRIGMGKGKSKEVPVAVQKAMEEARRKMIKVTLKNGTLQHTVTGKHGASSVLMLPAKDGTGVIAGGPMRAIFEVMGVTNVVAKSTGSTNPYNMVRATLDGLAKMNTASEIAAKRGKSVEEILG.

The S5 DRBM domain maps to 17–80 (MREKMIAVNR…EEARRKMIKV (64 aa)).

The protein belongs to the universal ribosomal protein uS5 family. As to quaternary structure, part of the 30S ribosomal subunit. Contacts proteins S4 and S8.

In terms of biological role, with S4 and S12 plays an important role in translational accuracy. Functionally, located at the back of the 30S subunit body where it stabilizes the conformation of the head with respect to the body. The sequence is that of Small ribosomal subunit protein uS5 from Janthinobacterium sp. (strain Marseille) (Minibacterium massiliensis).